Consider the following 711-residue polypeptide: Double-stranded RNA-specific editase 1 (711 aa).

The tract at residues M1–L78 is disordered. Over residues S63–T73 the composition is skewed to basic residues. The region spanning L78–Q144 is the DRBM 1 domain. 2 interaction with substrate RNA regions span residues L83–E88 and V104–H105. S149 bears the Phosphoserine mark. The tract at residues L176–P220 is disordered. Positions V192 to V213 are enriched in low complexity. A DRBM 2 domain is found at P231 to N298. 2 interaction with substrate RNA regions span residues V237–E242 and H259. Residues S370–F707 form the A to I editase domain. Residue H394 coordinates Zn(2+). Catalysis depends on E396, which acts as the Proton donor. The 1D-myo-inositol hexakisphosphate site is built by R400 and R401. Zn(2+)-binding residues include C451 and C526. 6 residues coordinate 1D-myo-inositol hexakisphosphate: K529, R532, K639, K672, K682, and K700.

Homodimer. Homodimerization is essential for its catalytic activity. Can form heterodimers with isoform 5 of ADAR/ADAR1. It depends on 1D-myo-inositol hexakisphosphate as a cofactor.

It is found in the nucleus. The protein localises to the nucleolus. The catalysed reaction is adenosine in double-stranded RNA + H2O + H(+) = inosine in double-stranded RNA + NH4(+). Catalyzes the hydrolytic deamination of adenosine to inosine in double-stranded RNA (dsRNA) referred to as A-to-I RNA editing. This may affect gene expression and function in a number of ways that include mRNA translation by changing codons and hence the amino acid sequence of proteins; pre-mRNA splicing by altering splice site recognition sequences; RNA stability by changing sequences involved in nuclease recognition; genetic stability in the case of RNA virus genomes by changing sequences during viral RNA replication; and RNA structure-dependent activities such as microRNA production or targeting or protein-RNA interactions. Can edit both viral and cellular RNAs and can edit RNAs at multiple sites (hyper-editing) or at specific sites (site-specific editing). Its cellular RNA substrates include: bladder cancer-associated protein (BLCAP), neurotransmitter receptors for glutamate (GRIA2 and GRIK2) and serotonin (HTR2C), GABA receptor (GABRA3) and potassium voltage-gated channel (KCNA1). Site-specific RNA editing of transcripts encoding these proteins results in amino acid substitutions which consequently alter their functional activities. Edits GRIA2 at both the Q/R and R/G sites efficiently but converts the adenosine in hotspot1 much less efficiently. Can inhibit cell proliferation and migration and can stimulate exocytosis. This Mus musculus (Mouse) protein is Double-stranded RNA-specific editase 1 (Adarb1).